Consider the following 380-residue polypeptide: MDFALLPPEVNSARMYTGPGAGSLLAAAGGWDSLAAELATTAEAYGSVLSGLAALHWRGPAAESMAVTAAPYIGWLYTTAEKTQQTAIQARAAALAFEQAYAMTLPPPVVAANRIQLLALIATNFFGQNTAAIAATEAQYAEMWAQDAAAMYGYATASAAAALLTPFSPPRQTTNPAGLTAQAAAVSQATDPLSLLIETVTQALQALTIPSFIPEDFTFLDAIFAGYATVGVTQDVESFVAGTIGAESNLGLLNVGDENPAEVTPGDFGIGELVSATSPGGGVSASGAGGAASVGNTVLASVGRANSIGQLSVPPSWAAPSTRPVSALSPAGLTTLPGTDVAEHGMPGVPGVPVAAGRASGVLPRYGVRLTVMAHPPAAG.

Position 1 is an N-acetylmethionine (Met-1).

It belongs to the mycobacterial PPE family. In terms of assembly, interacts with PE19 and PE25.

The protein resides in the cell outer membrane. In terms of biological role, small molecule-selective channel required for the uptake of nutrients across the outer mycomembrane. Transports glycerol and glucose. Involved in sensitivity to M.tuberculosis growth inhibitory agrichemical 3,3-bis-di(methylsulfonyl)propionamide (3bMP1). Transports maltose and lactose disaccharides. Involved in sensitivity to bactericidal thio-disaccharide T-6 compound (1,6-anhydro-3-deoxy-4-S-(2,3,4,6-tetra-O-acetyl-beta-D-glucopyranosyl)-D-glycero-hexopyranos-2-ulose). Transports extracellular trehalose, a component of the cell envelope, and trehalose analog, 6-azido trehalose (6-TreAz), which has antimycobacterial activity. Its function is as follows. Plays a role in response to starvation and stress, likely environment within the host. Inhibits canonical autophagy in infected mouse RAW264.7 macrophages. Inhibits autophagy and enhances intracellular bacterial survival when expressed in human macrophage-like THP-1 cells. Inhibits Toll-like receptor 2 (TLR2)-dependent signaling leading to autophagy inhibition, increased intracellular bacterial survival, reduced phagocytosis and reduced secretion of interleukin 6 (IL-6) and IL-1 in infected mouse primary bone marrow-derived macrophage (BMDM) cells. Required for virulence and persistence in the lungs and spleens of intranasally infected C57BL/6J mice. Blocks the antibacterial effects of TLR2 activation, suppresses MHC class II-dependent antigen presentation, and reduces IFN-gamma and TNF-alpha-producing CD4(+) T cells during infection in C57BL/6J mice. The polypeptide is Transporter PPE51 (PPE51) (Mycobacterium tuberculosis (strain CDC 1551 / Oshkosh)).